The following is a 214-amino-acid chain: Phosphoenolpyruvate guanylyltransferase (214 aa).

Phosphoenolpyruvate-binding residues include Thr-148, Gly-163, and Ser-166.

The protein belongs to the CofC family.

The enzyme catalyses phosphoenolpyruvate + GTP + H(+) = enolpyruvoyl-2-diphospho-5'-guanosine + diphosphate. The protein operates within cofactor biosynthesis; coenzyme F420 biosynthesis. Guanylyltransferase that catalyzes the activation of phosphoenolpyruvate (PEP) as enolpyruvoyl-2-diphospho-5'-guanosine, via the condensation of PEP with GTP. It is involved in the biosynthesis of coenzyme F420, a hydride carrier cofactor. The chain is Phosphoenolpyruvate guanylyltransferase from Mycobacterium tuberculosis (strain KZN 1435 / MDR).